A 131-amino-acid polypeptide reads, in one-letter code: MSWQTYVDDHLMCDIEGQHLTAAAVIGHDGSVWAQSATFPQFKPEEVAAIIKDFDEPGSLAPTGLHLGGTKYMVIQGEPGAVIRGKKGAGGITVKKTGQALIFGIYDEPLTPGQCNIIVERLGDYLLEQGL.

C13 and C115 are disulfide-bonded. The Involved in PIP2 interaction signature appears at 81 to 97 (AVIRGKKGAGGITVKKT). T111 carries the phosphothreonine modification.

This sequence belongs to the profilin family. Occurs in many kinds of cells as a complex with monomeric actin in a 1:1 ratio. Phosphorylated by MAP kinases.

It localises to the cytoplasm. The protein localises to the cytoskeleton. Binds to actin and affects the structure of the cytoskeleton. At high concentrations, profilin prevents the polymerization of actin, whereas it enhances it at low concentrations. The protein is Profilin-4 of Olea europaea (Common olive).